The chain runs to 306 residues: tRNA-cytidine(32) 2-sulfurtransferase (306 aa).

The interval 1–25 (MSAVISLPDPQPRAARDPRVAEREQ) is disordered. Over residues 14–25 (AARDPRVAEREQ) the composition is skewed to basic and acidic residues. Residues 57–62 (SGGKDS) carry the PP-loop motif motif. [4Fe-4S] cluster-binding residues include Cys132, Cys135, and Cys223. A disordered region spans residues 286-306 (AHAWLAGSPADADADPETPTV). Acidic residues predominate over residues 297-306 (ADADPETPTV).

Belongs to the TtcA family. In terms of assembly, homodimer. The cofactor is Mg(2+). It depends on [4Fe-4S] cluster as a cofactor.

It is found in the cytoplasm. It carries out the reaction cytidine(32) in tRNA + S-sulfanyl-L-cysteinyl-[cysteine desulfurase] + AH2 + ATP = 2-thiocytidine(32) in tRNA + L-cysteinyl-[cysteine desulfurase] + A + AMP + diphosphate + H(+). It participates in tRNA modification. In terms of biological role, catalyzes the ATP-dependent 2-thiolation of cytidine in position 32 of tRNA, to form 2-thiocytidine (s(2)C32). The sulfur atoms are provided by the cysteine/cysteine desulfurase (IscS) system. The polypeptide is tRNA-cytidine(32) 2-sulfurtransferase (Stenotrophomonas maltophilia (strain K279a)).